Reading from the N-terminus, the 420-residue chain is Glycogen synthase kinase-3 beta (420 aa).

Over residues 1–24 (MSGRPRTTSFAESCKPVQQPSSFG) the composition is skewed to polar residues. The tract at residues 1–50 (MSGRPRTTSFAESCKPVQQPSSFGSMKVSRDKDGSKVTTVVATPGQGPDR) is disordered. One can recognise a Protein kinase domain in the interval 56-340 (YTDTKVIGNG…PLDACAHSFF (285 aa)). Residues 62-70 (IGNGSFGVV) and Lys85 contribute to the ATP site. The Proton acceptor role is filled by Asp181. Positions 384–420 (NQAAVSTTSNTTSTSDSNTGERGSTNNAASASASNSS) are disordered. Composition is skewed to low complexity over residues 389 to 401 (STTS…SDSN) and 409 to 420 (NNAASASASNSS).

The protein belongs to the protein kinase superfamily. CMGC Ser/Thr protein kinase family. GSK-3 subfamily. Phosphorylated. Activated by phosphorylation at Tyr-216.

The protein resides in the cytoplasm. Its subcellular location is the nucleus. It is found in the cell membrane. It catalyses the reaction L-seryl-[tau protein] + ATP = O-phospho-L-seryl-[tau protein] + ADP + H(+). The enzyme catalyses L-threonyl-[tau protein] + ATP = O-phospho-L-threonyl-[tau protein] + ADP + H(+). Its function is as follows. Plays a role in the organization of the formation of the main body axis of developing embryo. Acts as an inhibitor of differentiation of primary neurons. Inhibits the ability of ectopically expressed NEUROD1 and other bHLH factors to promote early retinal cell differentiation. May participate in the Wnt signaling pathway. May regulate the circadian clock via phosphorylation of the major clock components. The protein is Glycogen synthase kinase-3 beta (gsk3b) of Xenopus laevis (African clawed frog).